Consider the following 260-residue polypeptide: HTH-type transcriptional activator FapR (260 aa).

The region spanning 154–251 is the HTH araC/xylS-type domain; sequence ERIVTLLFSD…GVTPKKFEIG (98 aa). 2 DNA-binding regions (H-T-H motif) span residues 171 to 192 and 218 to 241; these read SDIA…EQEC and IGMI…KEYY.

In terms of assembly, homodimer.

In terms of biological role, positive regulator of the expression of the 987P operon for the fimbrial protein in enterotoxigenic E.coli. The protein is HTH-type transcriptional activator FapR of Escherichia coli.